Reading from the N-terminus, the 506-residue chain is Zinc finger protein 157 (506 aa).

Residues 27–98 enclose the KRAB domain; that stretch reads VSFEDVAVDF…EEESSGHGYS (72 aa). C2H2-type zinc fingers lie at residues 162 to 184, 190 to 212, 218 to 240, 246 to 268, 274 to 296, 302 to 324, 330 to 352, 358 to 380, 386 to 408, 414 to 436, 442 to 464, and 470 to 492; these read FECH…LRIH, YECG…QKTH, FECN…TRTH, YECT…QRTH, YECS…HRTH, YECG…QRIH, YECG…QRTH, YQCN…QRIH, YECN…QRMH, YECS…RRTH, YECS…QRIH, and FECQ…QRTH.

This sequence belongs to the krueppel C2H2-type zinc-finger protein family.

The protein localises to the nucleus. Functionally, may be involved in transcriptional regulation. In Homo sapiens (Human), this protein is Zinc finger protein 157 (ZNF157).